A 550-amino-acid polypeptide reads, in one-letter code: Chaperonin GroEL (550 aa).

Residues 30 to 33 (TLGP), Lys-51, 87 to 91 (DGTTT), Gly-415, 479 to 481 (NAA), and Asp-495 contribute to the ATP site.

The protein belongs to the chaperonin (HSP60) family. In terms of assembly, forms a cylinder of 14 subunits composed of two heptameric rings stacked back-to-back. Interacts with the co-chaperonin GroES.

It is found in the cytoplasm. The enzyme catalyses ATP + H2O + a folded polypeptide = ADP + phosphate + an unfolded polypeptide.. Together with its co-chaperonin GroES, plays an essential role in assisting protein folding. The GroEL-GroES system forms a nano-cage that allows encapsulation of the non-native substrate proteins and provides a physical environment optimized to promote and accelerate protein folding. The polypeptide is Chaperonin GroEL (Marinobacter nauticus (strain ATCC 700491 / DSM 11845 / VT8) (Marinobacter aquaeolei)).